A 622-amino-acid chain; its full sequence is Dehydrogenase mpl7 (622 aa).

FAD is bound by residues 23–24 (TA), 44–45 (EA), and 102–105 (NFMS). The active-site Proton acceptor is H554. Residues A582 and 593 to 594 (IM) each bind FAD.

It belongs to the GMC oxidoreductase family. As to quaternary structure, homodimer. FAD is required as a cofactor.

It participates in mycotoxin biosynthesis. Dehydrogenase; part of the gene cluster that mediates the biosynthesis of the mycotoxin citrinin, a hepato-nephrotoxic compound to humans due to inhibition of respiration complex III. The pathway begins with the synthesis of a keto-aldehyde intermediate by the citrinin PKS (pksCT) from successive condensations of 4 malonyl-CoA units, presumably with a simple acetyl-CoA starter unit. Release of the keto-aldehyde intermediate is consistent with the presence of the C-terminal reductive release domain. Mp11 collaborates with pksCT by catalyzing the hydrolysis of ACP-bound acyl intermediates to free the ACP from stalled intermediates. Mpl2 then catalyzes the oxidation of the C-12 methyl of the ketone intermediate to an alcohol intermediate which is further oxidized by the oxidoreductase mpl7 to produce a bisaldehyde intermediate. The fourth catalytic step is catalyzed by the mpl4 aldehyde dehydrogenase. The final transformation is the reduction of C-3 by mpl6 to provide the chemically stable citrinin nucleus. The polypeptide is Dehydrogenase mpl7 (Monascus purpureus (Red mold)).